The primary structure comprises 207 residues: MSPLLRRLLLAALLQLAPAQAPVSQPDAPGHQRKVVSWIDVYTRATCQPREVVVPLTVELMGTVAKQLVPSCVTVQRCGGCCPDDGLECVPTGQHQVRMQILMIRYPSSQLGEMSLEEHSQCECRPKKKDSAVKPDRAATPHHRPQPRSVPGWDSAPGAPSPADITHPTPAPGPSAHAAPSTTSALTPGPAAAAADAAASSVAKGGA.

The N-terminal stretch at 1–21 (MSPLLRRLLLAALLQLAPAQA) is a signal peptide. 3 cysteine pairs are disulfide-bonded: Cys47-Cys89, Cys78-Cys122, and Cys82-Cys124. Residues 122-139 (CECRPKKKDSAVKPDRAA) are compositionally biased toward basic and acidic residues. Residues 122-207 (CECRPKKKDS…AASSVAKGGA (86 aa)) are disordered. Over residues 174 to 207 (PSAHAAPSTTSALTPGPAAAAADAAASSVAKGGA) the composition is skewed to low complexity.

It belongs to the PDGF/VEGF growth factor family. In terms of assembly, homodimer; disulfide-linked. Can also form heterodimer with VEGF. Post-translationally, VEGF-B186 is O-glycosylated. As to expression, expressed in all tissues except liver. Highest levels found in heart, skeletal muscle and pancreas.

Its subcellular location is the secreted. In terms of biological role, growth factor for endothelial cells. VEGF-B167 binds heparin and neuropilin-1 whereas the binding to neuropilin-1 of VEGF-B186 is regulated by proteolysis. This is Vascular endothelial growth factor B (VEGFB) from Homo sapiens (Human).